The primary structure comprises 67 residues: ATP synthase F(0) complex subunit 8 (67 aa).

Residues 8–24 (TWFITIVSMLLSLFILM) form a helical membrane-spanning segment. K54 bears the N6-acetyllysine; alternate mark. K54 is subject to N6-succinyllysine; alternate. Position 57 is an N6-acetyllysine (K57).

It belongs to the ATPase protein 8 family. In terms of assembly, component of the ATP synthase complex composed at least of ATP5F1A/subunit alpha, ATP5F1B/subunit beta, ATP5MC1/subunit c (homooctomer), MT-ATP6/subunit a, MT-ATP8/subunit 8, ATP5ME/subunit e, ATP5MF/subunit f, ATP5MG/subunit g, ATP5MK/subunit k, ATP5MJ/subunit j, ATP5F1C/subunit gamma, ATP5F1D/subunit delta, ATP5F1E/subunit epsilon, ATP5PF/subunit F6, ATP5PB/subunit b, ATP5PD/subunit d, ATP5PO/subunit OSCP. ATP synthase complex consists of a soluble F(1) head domain (subunits alpha(3) and beta(3)) - the catalytic core - and a membrane F(0) domain - the membrane proton channel (subunits c, a, 8, e, f, g, k and j). These two domains are linked by a central stalk (subunits gamma, delta, and epsilon) rotating inside the F1 region and a stationary peripheral stalk (subunits F6, b, d, and OSCP). Interacts with PRICKLE3.

Its subcellular location is the mitochondrion membrane. Subunit 8, of the mitochondrial membrane ATP synthase complex (F(1)F(0) ATP synthase or Complex V) that produces ATP from ADP in the presence of a proton gradient across the membrane which is generated by electron transport complexes of the respiratory chain. ATP synthase complex consist of a soluble F(1) head domain - the catalytic core - and a membrane F(1) domain - the membrane proton channel. These two domains are linked by a central stalk rotating inside the F(1) region and a stationary peripheral stalk. During catalysis, ATP synthesis in the catalytic domain of F(1) is coupled via a rotary mechanism of the central stalk subunits to proton translocation. In vivo, can only synthesize ATP although its ATP hydrolase activity can be activated artificially in vitro. Part of the complex F(0) domain. The polypeptide is ATP synthase F(0) complex subunit 8 (Dasypus novemcinctus (Nine-banded armadillo)).